The sequence spans 101 residues: Large ribosomal subunit protein uL6m (101 aa).

Belongs to the universal ribosomal protein uL6 family.

Its subcellular location is the mitochondrion. This Marchantia polymorpha (Common liverwort) protein is Large ribosomal subunit protein uL6m (RPL6).